We begin with the raw amino-acid sequence, 419 residues long: Aminoacyltransferase FemB (419 aa).

This sequence belongs to the FemABX family. As to quaternary structure, homodimer. Interacts with FemA.

Its subcellular location is the cytoplasm. It carries out the reaction MurNAc-L-Ala-D-isoglutaminyl-L-Lys-(N(6)-tri-Gly)-D-Ala-D-Ala-diphospho-di-trans,octa-cis-undecaprenyl-GlcNAc + 2 glycyl-tRNA(Gly) = MurNAc-L-Ala-D-isoglutaminyl-L-Lys-(N(6)-penta-Gly)-D-Ala-D-Ala-diphospho-di-trans,octa-cis-undecaprenyl-GlcNAc + 2 tRNA(Gly) + 2 H(+). Catalyzes the formation of the pentaglycine interpeptide bridge, which is characteristic of the S.aureus peptidoglycan. Adds glycines 4 and 5 of the pentaglycine bridge, using glycyl-tRNA(Gly) as donor. Involved in resistance to methicillin. The sequence is that of Aminoacyltransferase FemB (femB) from Staphylococcus aureus (strain MW2).